The sequence spans 771 residues: Assimilatory nitrate reductase electron transfer subunit (771 aa).

Residue 43-79 (YNRILLSSVLQGEASLDDITLNSKDWYDKHGITLYTG) participates in FAD binding. [2Fe-2S] cluster-binding residues include C414, C416, C449, and C452.

Requires FAD as cofactor. [2Fe-2S] cluster serves as cofactor.

Its function is as follows. Required for nitrate assimilation. The polypeptide is Assimilatory nitrate reductase electron transfer subunit (nasB) (Bacillus subtilis (strain 168)).